Consider the following 140-residue polypeptide: Large ribosomal subunit protein uL11 (140 aa).

It belongs to the universal ribosomal protein uL11 family. As to quaternary structure, part of the ribosomal stalk of the 50S ribosomal subunit. Interacts with L10 and the large rRNA to form the base of the stalk. L10 forms an elongated spine to which L12 dimers bind in a sequential fashion forming a multimeric L10(L12)X complex. Post-translationally, one or more lysine residues are methylated.

Its function is as follows. Forms part of the ribosomal stalk which helps the ribosome interact with GTP-bound translation factors. The protein is Large ribosomal subunit protein uL11 of Campylobacter hominis (strain ATCC BAA-381 / DSM 21671 / CCUG 45161 / LMG 19568 / NCTC 13146 / CH001A).